Consider the following 153-residue polypeptide: IAA acetyltransferase (153 aa).

Residues 4–153 enclose the N-acetyltransferase domain; it reads VTIARESPLQ…PLSLFMEKPL (150 aa).

Participates in the tryptophan-dependent indole-3-acetic acid production, which is a phytohormone released by A.brasilense. The protein is IAA acetyltransferase of Azospirillum brasilense.